We begin with the raw amino-acid sequence, 129 residues long: Large ribosomal subunit protein eL31 (129 aa).

The interval 1 to 46 (MSQETTATKQEEQKTSELQQQKKEEQKPQQATTTTKEEKKTKPEKE) is disordered. 2 stretches are compositionally biased toward basic and acidic residues: residues 9 to 27 (KQEEQKTSELQQQKKEEQK) and 35 to 46 (TKEEKKTKPEKE).

The protein belongs to the eukaryotic ribosomal protein eL31 family.

The polypeptide is Large ribosomal subunit protein eL31 (rpl31e) (Sulfolobus acidocaldarius (strain ATCC 33909 / DSM 639 / JCM 8929 / NBRC 15157 / NCIMB 11770)).